A 435-amino-acid polypeptide reads, in one-letter code: Ornithine decarboxylase (435 aa).

Lys98 carries the N6-(pyridoxal phosphate)lysine modification. Pyridoxal 5'-phosphate is bound by residues Ser230, Gly268, and 301 to 304 (EPGR). 344–345 (YD) serves as a coordination point for substrate. The active-site Proton donor; shared with dimeric partner is the Cys380. Asp381 is a substrate binding site. Tyr409 contributes to the pyridoxal 5'-phosphate binding site.

It belongs to the Orn/Lys/Arg decarboxylase class-II family. As to quaternary structure, homodimer. Only the dimer is catalytically active, as the active sites are constructed of residues from both monomers. Pyridoxal 5'-phosphate is required as a cofactor.

It carries out the reaction L-ornithine + H(+) = putrescine + CO2. It functions in the pathway amine and polyamine biosynthesis; putrescine biosynthesis via L-ornithine pathway; putrescine from L-ornithine: step 1/1. With respect to regulation, inhibited by antizyme (AZ) in response to polyamine levels. AZ inhibits the assembly of the functional homodimer by binding to ODC monomers and targeting them for ubiquitin-independent proteolytic destruction by the 26S proteasome. In terms of biological role, catalyzes the first and rate-limiting step of polyamine biosynthesis that converts ornithine into putrescine, which is the precursor for the polyamines, spermidine and spermine. Polyamines are essential for cell proliferation and are implicated in cellular processes, ranging from DNA replication to apoptosis. The chain is Ornithine decarboxylase (ODC) from Capsicum annuum (Capsicum pepper).